A 1480-amino-acid chain; its full sequence is C-type mannose receptor 2 (1480 aa).

An N-terminal signal peptide occupies residues 1–30 (MGPIRPALAPWPRHLLRCVLLLGGLRLGHP). The Extracellular portion of the chain corresponds to 31–1413 (ADSAAALLEP…SAALPENPVA (1383 aa)). Residues 40-166 (PDVFLIFSQG…WNIYGSEEDL (127 aa)) form the Ricin B-type lectin domain. Intrachain disulfides connect C53–C67 and C92–C111. 2 N-linked (GlcNAc...) asparagine glycosylation sites follow: N101 and N139. In terms of domain architecture, Fibronectin type-II spans 181-229 (SHGKPCTIPFKYDNQWFHGCTSTGREDGHLWCATTQDYGKDERWGFCPI). Cystine bridges form between C186–C212, C200–C227, C265–C358, and C334–C350. A C-type lectin 1 domain is found at 243 to 359 (LTDSCYQFNF…CSIALPYVCK (117 aa)). A glycan (N-linked (GlcNAc...) asparagine) is linked at N363. C-type lectin domains follow at residues 388–504 (FQGH…SICK), 527–643 (HSPS…RYIC), 677–808 (KLRH…WICK), 831–950 (FQEA…YICK), 978–1106 (FLNK…GFIC), 1131–1242 (YLNR…GAVC), and 1271–1391 (FREH…GVVC). 7 disulfides stabilise this stretch: C409–C503, C480–C495, C617–C634, C703–C807, C784–C799, C852–C949, and C926–C941. A glycan (N-linked (GlcNAc...) asparagine) is linked at N1028. A disulfide bridge links C1077 with C1097. K1141 is covalently cross-linked (Glycyl lysine isopeptide (Lys-Gly) (interchain with G-Cter in SUMO1)). An intrachain disulfide couples C1219 to C1233. N-linked (GlcNAc...) asparagine glycosylation occurs at N1348. C1367 and C1382 are oxidised to a cystine. A helical membrane pass occupies residues 1414–1434 (LVVVLTAAVLLLLALLTGALI). The Cytoplasmic portion of the chain corresponds to 1435–1480 (LYRRRQSAERGSFEGARYSRSSRSGPAEATEKNILVSDMEMNEQQE). Residues 1446–1480 (SFEGARYSRSSRSGPAEATEKNILVSDMEMNEQQE) form a disordered region.

As to quaternary structure, interacts directly with PLAUR/UPAR and PLAU/pro-UPA to form a tri-molecular complex. Interacts with collagen V. Interacts with C-terminal region of type I collagen/COL1A1. In terms of processing, N-glycosylated. Phosphorylated.

The protein localises to the cell membrane. Functionally, may play a role as endocytotic lectin receptor displaying calcium-dependent lectin activity. Internalizes glycosylated ligands from the extracellular space for release in an endosomal compartment via clathrin-mediated endocytosis. May be involved in plasminogen activation system controlling the extracellular level of PLAUR/PLAU, and thus may regulate protease activity at the cell surface. May contribute to cellular uptake, remodeling and degradation of extracellular collagen matrices. May participate in remodeling of extracellular matrix cooperating with the matrix metalloproteinases (MMPs) secreted by hepatic stellate cells. May mediate endocytosis of partially degraded collagens and glycoproteins produced in the extracellular matrix by MMPs. The chain is C-type mannose receptor 2 (Mrc2) from Rattus norvegicus (Rat).